Here is a 244-residue protein sequence, read N- to C-terminus: NAD(P)H-quinone oxidoreductase subunit K (244 aa).

[4Fe-4S] cluster-binding residues include Cys-60, Cys-61, Cys-125, and Cys-156. The span at 221-236 (SKKEKITELPENREQT) shows a compositional bias: basic and acidic residues. The interval 221–244 (SKKEKITELPENREQTEIINSEEE) is disordered.

The protein belongs to the complex I 20 kDa subunit family. As to quaternary structure, NDH-1 can be composed of about 15 different subunits; different subcomplexes with different compositions have been identified which probably have different functions. [4Fe-4S] cluster is required as a cofactor.

It localises to the cellular thylakoid membrane. It catalyses the reaction a plastoquinone + NADH + (n+1) H(+)(in) = a plastoquinol + NAD(+) + n H(+)(out). It carries out the reaction a plastoquinone + NADPH + (n+1) H(+)(in) = a plastoquinol + NADP(+) + n H(+)(out). In terms of biological role, NDH-1 shuttles electrons from an unknown electron donor, via FMN and iron-sulfur (Fe-S) centers, to quinones in the respiratory and/or the photosynthetic chain. The immediate electron acceptor for the enzyme in this species is believed to be plastoquinone. Couples the redox reaction to proton translocation, and thus conserves the redox energy in a proton gradient. Cyanobacterial NDH-1 also plays a role in inorganic carbon-concentration. This Prochlorococcus marinus (strain MIT 9312) protein is NAD(P)H-quinone oxidoreductase subunit K.